A 242-amino-acid chain; its full sequence is Pyridoxine 5'-phosphate synthase (242 aa).

A 3-amino-2-oxopropyl phosphate-binding site is contributed by asparagine 6. A 1-deoxy-D-xylulose 5-phosphate-binding site is contributed by 8 to 9 (DH). Arginine 17 contacts 3-amino-2-oxopropyl phosphate. Histidine 42 functions as the Proton acceptor in the catalytic mechanism. 1-deoxy-D-xylulose 5-phosphate-binding residues include arginine 44 and histidine 49. Residue glutamate 69 is the Proton acceptor of the active site. Threonine 99 is a 1-deoxy-D-xylulose 5-phosphate binding site. The active-site Proton donor is histidine 193. 3-amino-2-oxopropyl phosphate contacts are provided by residues glycine 194 and 217–218 (GH).

It belongs to the PNP synthase family. As to quaternary structure, homooctamer; tetramer of dimers.

The protein localises to the cytoplasm. It carries out the reaction 3-amino-2-oxopropyl phosphate + 1-deoxy-D-xylulose 5-phosphate = pyridoxine 5'-phosphate + phosphate + 2 H2O + H(+). The protein operates within cofactor biosynthesis; pyridoxine 5'-phosphate biosynthesis; pyridoxine 5'-phosphate from D-erythrose 4-phosphate: step 5/5. Functionally, catalyzes the complicated ring closure reaction between the two acyclic compounds 1-deoxy-D-xylulose-5-phosphate (DXP) and 3-amino-2-oxopropyl phosphate (1-amino-acetone-3-phosphate or AAP) to form pyridoxine 5'-phosphate (PNP) and inorganic phosphate. In Aquifex aeolicus (strain VF5), this protein is Pyridoxine 5'-phosphate synthase.